A 104-amino-acid chain; its full sequence is Large ribosomal subunit protein uL23 (104 aa).

The protein belongs to the universal ribosomal protein uL23 family. As to quaternary structure, part of the 50S ribosomal subunit. Contacts protein L29, and trigger factor when it is bound to the ribosome.

Its function is as follows. One of the early assembly proteins it binds 23S rRNA. One of the proteins that surrounds the polypeptide exit tunnel on the outside of the ribosome. Forms the main docking site for trigger factor binding to the ribosome. The chain is Large ribosomal subunit protein uL23 from Paraburkholderia phytofirmans (strain DSM 17436 / LMG 22146 / PsJN) (Burkholderia phytofirmans).